Here is a 700-residue protein sequence, read N- to C-terminus: Elongation factor G (700 aa).

The tr-type G domain occupies 8–290; it reads DKYRNIGISA…AVVELLPSPL (283 aa). GTP contacts are provided by residues 17 to 24, 88 to 92, and 142 to 145; these read AHIDAGKT, DTPGH, and NKMD.

Belongs to the TRAFAC class translation factor GTPase superfamily. Classic translation factor GTPase family. EF-G/EF-2 subfamily.

It is found in the cytoplasm. Functionally, catalyzes the GTP-dependent ribosomal translocation step during translation elongation. During this step, the ribosome changes from the pre-translocational (PRE) to the post-translocational (POST) state as the newly formed A-site-bound peptidyl-tRNA and P-site-bound deacylated tRNA move to the P and E sites, respectively. Catalyzes the coordinated movement of the two tRNA molecules, the mRNA and conformational changes in the ribosome. The sequence is that of Elongation factor G from Polynucleobacter necessarius subsp. necessarius (strain STIR1).